The sequence spans 495 residues: Ectonucleoside triphosphate diphosphohydrolase 2 (495 aa).

The Cytoplasmic segment spans residues 2-4 (ARR). The chain crosses the membrane as a helical span at residues 5–25 (AAAVLLLLALGCLLGILLLCL). The Extracellular segment spans residues 26-465 (GSGDARGPPS…SHRSMLYNYW (440 aa)). N62 is a glycosylation site (N-linked (GlcNAc...) asparagine). C73 and C97 form a disulfide bridge. Catalysis depends on E162, which acts as the Proton acceptor. 201-205 (GASTQ) provides a ligand contact to ATP. 4 disulfides stabilise this stretch: C239/C286, C267/C311, C324/C329, and C378/C400. N-linked (GlcNAc...) asparagine glycosylation is present at N297. 2 N-linked (GlcNAc...) asparagine glycosylation sites follow: N418 and N444. The helical transmembrane segment at 466 to 486 (VILILLFVITTLTALLTAVYL) threads the bilayer. At 487-495 (LRRSKSSTI) the chain is on the cytoplasmic side.

It belongs to the GDA1/CD39 NTPase family. It depends on Ca(2+) as a cofactor. Mg(2+) is required as a cofactor.

The protein resides in the membrane. In terms of biological role, in the nervous system, could hydrolyze ATP and other nucleotides to regulate purinergic neurotransmission. Hydrolyzes ADP only to a marginal extent. The sequence is that of Ectonucleoside triphosphate diphosphohydrolase 2 (ENTPD2) from Gallus gallus (Chicken).